A 963-amino-acid polypeptide reads, in one-letter code: Respiratory burst oxidase homolog protein A (963 aa).

The span at 1-12 shows a compositional bias: basic and acidic residues; the sequence is MRGLPGHERRWT. Residues 1 to 36 form a disordered region; it reads MRGLPGHERRWTSDTVSSGKDLSGESSPGTDSGNIS. At 1 to 399 the chain is on the cytoplasmic side; that stretch reads MRGLPGHERR…VYSLQENWKR (399 aa). A compositionally biased stretch (polar residues) spans 13–36; it reads SDTVSSGKDLSGESSPGTDSGNIS. EF-hand-like regions lie at residues 219 to 227 and 253 to 264; these read AKDGYLYRS and RRLKVDKISKEE. Residues 276 to 311 enclose the EF-hand domain; it reads SFDSRLQIFFDMVDKNEDGRIGEEEVKEIIMLSASA. Ca(2+) is bound by residues Asp289, Asn291, Asp293, Arg295, and Glu300. A helical membrane pass occupies residues 400-420; that stretch reads IWVLVLWILIMIGLFLWKFYL. Over 421-435 the chain is Extracellular; that stretch reads YKQKSAFQVMGYCLL. A helical membrane pass occupies residues 436-456; sequence TAKGAAETLKFNMALILLPVC. Residues 438-595 form the Ferric oxidoreductase domain; the sequence is KGAAETLKFN…LLIIVYIVLI (158 aa). Topologically, residues 457-482 are cytoplasmic; that stretch reads RNTITFLRSTKLSCFVPFDDNINFHK. A helical membrane pass occupies residues 483–503; that stretch reads TVAAAIVTGIILHAGNHLVCD. Residues 504–535 are Extracellular-facing; that stretch reads FPKLIHANNTNYQKYLVNDFGPSQPQYIDLVK. The chain crosses the membrane as a helical span at residues 536 to 556; the sequence is GVEGVTGIIMVILMAIAFTLA. Residues 557–583 lie on the Cytoplasmic side of the membrane; sequence TRWFRRSLIKFPKPFDRLTGFNAFWYS. The helical transmembrane segment at 584-604 threads the bilayer; the sequence is HHLLIIVYIVLIIHGTFLYLV. Residues 605–759 are Extracellular-facing; the sequence is HNWYSKTTWM…APAQDYRKYD (155 aa). The region spanning 634-754 is the FAD-binding FR-type domain; that stretch reads SGLYTVRLLK…DGPYGAPAQD (121 aa). The helical transmembrane segment at 760–780 threads the bilayer; the sequence is VLLLVGLGIGATPFISILKDL. Residues 781–963 are Cytoplasmic-facing; that stretch reads LKNIVTMEEQ…TKFEFHKEHF (183 aa).

This sequence belongs to the RBOH (TC 5.B.1.3) family. In terms of assembly, monomer and homodimer. In terms of processing, phosphorylated by CPK.

Its subcellular location is the cell membrane. In terms of biological role, calcium-dependent NADPH oxidase that generates superoxide. Involved in the rapid and transient phase I oxidative burst induced by pathogen infection. This chain is Respiratory burst oxidase homolog protein A (RBOHA), found in Solanum tuberosum (Potato).